Reading from the N-terminus, the 159-residue chain is Probable deoxyuridine 5'-triphosphate nucleotidohydrolase (159 aa).

Belongs to the dCTP deaminase family. Archaeal dUTPase subfamily.

It catalyses the reaction dUTP + H2O = dUMP + diphosphate + H(+). The protein operates within pyrimidine metabolism; dUMP biosynthesis; dUMP from dCTP (dUTP route): step 2/2. Its function is as follows. This enzyme is involved in nucleotide metabolism: it produces dUMP, the immediate precursor of thymidine nucleotides and it decreases the intracellular concentration of dUTP so that uracil cannot be incorporated into DNA. This is Probable deoxyuridine 5'-triphosphate nucleotidohydrolase from Aeropyrum pernix (strain ATCC 700893 / DSM 11879 / JCM 9820 / NBRC 100138 / K1).